Consider the following 289-residue polypeptide: Extracellular ribonuclease (289 aa).

The first 24 residues, 1 to 24, serve as a signal peptide directing secretion; sequence MTKKLWFLPIVCLFFILGWTAPSA. Positions 25–51 are excised as a propeptide; sequence SAGAPADTNLYSRLAVSTAGGTTLFPQ. The disordered stretch occupies residues 177 to 197; sequence FDNGGSEYPKAPGNYYDGDSW.

It is found in the secreted. In terms of biological role, mg(2+)-activated ribonuclease which hydrolyzes RNA apparently nonspecifically into oligonucleotides with 5'-terminal phosphate. The chain is Extracellular ribonuclease (bsn) from Bacillus amyloliquefaciens (Bacillus velezensis).